A 602-amino-acid chain; its full sequence is MFSAPLRRMMRVTKDEQIQPNSNAPENRKWFPRAPRPLRQFLDTLPRIGTAGSRSATLHVEDEQSPLGATLFDVATGASSINDRDTDASGLEPEKIRRFAWLRLIGTMGALMIAFGALGAGALPVVNNPYVDFPGGNFMSRMLQTSSMIVLIGVGFLVLAWVLMAPLVGIPFKRSGNRTASVSLSMLRRTFGAWVAPIMLTAPLFTQDIYSYLAQGSVTAQGMDAYAGGPLELLGPDNHLARSVPFIWAQSPSPYGPVALSIAASISVITNDSIVGGVLAHRIASLLGVVAAGWAITMLARRCRVSEEASFYLGVLNPLLILHLIGGIHNESILLGFLLVGLELGLRGTDRIQTGLWGPAWTYIALSGVLISCAGLVKVTGFIGLGFVGMALARAFHARGHRHVVAIGVAGLVQVAALVITVVVLSVITGISLGWITGQGGAATIRSWMSMTTNIGVISGFIGMNLGLGDHTAAMLVVTRAAGIAVAAAFMVRMLFATYRGHIHAVGGLGVATFVLVILFPVVHPWYMLWAIVPLASWANRLFFQLGVIAYSTAFSFFVLPRGLALPVGTVFSIYFGAALGFSILLLVGWWSLRRNPTFGLH.

A run of 13 helical transmembrane segments spans residues 105–125 (IGTM…ALPV), 148–168 (MIVL…APLV), 190–210 (TFGA…QDIY), 244–264 (VPFI…SIAA), 274–294 (IVGG…AAGW), 320–340 (LILH…FLLV), 368–388 (GVLI…LGFV), 404–424 (VVAI…TVVV), 448–468 (WMSM…NLGL), 472–492 (TAAM…AFMV), 503–523 (IHAV…FPVV), 546–566 (LGVI…GLAL), and 571–591 (VFSI…VGWW).

This sequence belongs to the MptA/B family.

Its subcellular location is the membrane. It participates in cell wall biogenesis; cell wall polysaccharide biosynthesis. Its function is as follows. Involved in the initiation of core alpha-(1-&gt;6) mannan biosynthesis of lipomannan (LM-A) and multi-mannosylated polymer (LM-B), extending triacylatedphosphatidyl-myo-inositol dimannoside (Ac1PIM2) and mannosylated glycolipid, 1,2-di-O-C16/C18:1-(alpha-D-mannopyranosyl)-(1-&gt;4)-(alpha-D-glucopyranosyluronic acid)-(1-&gt;3)-glycerol (Man1GlcAGroAc2), respectively. Catalyzes the addition of alpha-(1-&gt;6)-mannose residue. The sequence is that of Alpha-(1-&gt;6)-mannopyranosyltransferase B (mptB) from Corynebacterium glutamicum (strain ATCC 13032 / DSM 20300 / JCM 1318 / BCRC 11384 / CCUG 27702 / LMG 3730 / NBRC 12168 / NCIMB 10025 / NRRL B-2784 / 534).